We begin with the raw amino-acid sequence, 492 residues long: Cobyric acid synthase (492 aa).

The 189-residue stretch at 252-440 (RPKIAVLAYP…VHGLFADDHL (189 aa)) folds into the GATase cobBQ-type domain. The active-site Nucleophile is cysteine 334. Residue histidine 432 is part of the active site.

It belongs to the CobB/CobQ family. CobQ subfamily.

It functions in the pathway cofactor biosynthesis; adenosylcobalamin biosynthesis. In terms of biological role, catalyzes amidations at positions B, D, E, and G on adenosylcobyrinic A,C-diamide. NH(2) groups are provided by glutamine, and one molecule of ATP is hydrogenolyzed for each amidation. This chain is Cobyric acid synthase, found in Bradyrhizobium sp. (strain BTAi1 / ATCC BAA-1182).